We begin with the raw amino-acid sequence, 426 residues long: 2-(3-amino-3-carboxypropyl)histidine synthase subunit 1 (426 aa).

Positions 133, 239, and 368 each coordinate [4Fe-4S] cluster.

The protein belongs to the DPH1/DPH2 family. DPH1 subfamily. As to quaternary structure, component of the 2-(3-amino-3-carboxypropyl)histidine synthase complex composed of DPH1, DPH2, DPH3 and a NADH-dependent reductase, predominantly CBR1. [4Fe-4S] cluster is required as a cofactor.

The protein resides in the cytoplasm. It carries out the reaction L-histidyl-[translation elongation factor 2] + S-adenosyl-L-methionine = 2-[(3S)-amino-3-carboxypropyl]-L-histidyl-[translation elongation factor 2] + S-methyl-5'-thioadenosine + H(+). It functions in the pathway protein modification; peptidyl-diphthamide biosynthesis. Functionally, catalyzes the first step of diphthamide biosynthesis, a post-translational modification of histidine which occurs in elongation factor 2. DPH1 and DPH2 transfer a 3-amino-3-carboxypropyl (ACP) group from S-adenosyl-L-methionine (SAM) to a histidine residue, the reaction is assisted by a reduction system comprising DPH3 and a NADH-dependent reductase, predominantly CBR1. The sequence is that of 2-(3-amino-3-carboxypropyl)histidine synthase subunit 1 (DPH1) from Eremothecium gossypii (strain ATCC 10895 / CBS 109.51 / FGSC 9923 / NRRL Y-1056) (Yeast).